Reading from the N-terminus, the 217-residue chain is Large ribosomal subunit protein bL25 (217 aa).

This sequence belongs to the bacterial ribosomal protein bL25 family. CTC subfamily. As to quaternary structure, part of the 50S ribosomal subunit; part of the 5S rRNA/L5/L18/L25 subcomplex. Contacts the 5S rRNA. Binds to the 5S rRNA independently of L5 and L18.

In terms of biological role, this is one of the proteins that binds to the 5S RNA in the ribosome where it forms part of the central protuberance. The polypeptide is Large ribosomal subunit protein bL25 (Methylobacterium sp. (strain 4-46)).